A 499-amino-acid polypeptide reads, in one-letter code: Ent-kaurenoic acid oxidase 1 (499 aa).

The helical transmembrane segment at 5 to 25 (AWWAVAAVVAALAVVALDAAV) threads the bilayer. Residue Cys443 participates in heme binding.

The protein belongs to the cytochrome P450 family. Heme is required as a cofactor.

It localises to the endoplasmic reticulum membrane. It carries out the reaction ent-kaur-16-en-19-oate + 3 reduced [NADPH--hemoprotein reductase] + 3 O2 = gibberellin A12 + 3 oxidized [NADPH--hemoprotein reductase] + 4 H2O + 4 H(+). The enzyme catalyses ent-kaur-16-en-19-oate + reduced [NADPH--hemoprotein reductase] + O2 = ent-7alpha-hydroxykaur-16-en-19-oate + oxidized [NADPH--hemoprotein reductase] + H2O + H(+). The catalysed reaction is ent-7alpha-hydroxykaur-16-en-19-oate + reduced [NADPH--hemoprotein reductase] + O2 = gibberellin A12 aldehyde + oxidized [NADPH--hemoprotein reductase] + 2 H2O + H(+). It catalyses the reaction gibberellin A12 aldehyde + reduced [NADPH--hemoprotein reductase] + O2 = gibberellin A12 + oxidized [NADPH--hemoprotein reductase] + H2O + 2 H(+). It participates in plant hormone biosynthesis; gibberellin biosynthesis. Functionally, catalyzes three successive oxidations of ent-kaurenoic acid giving gibberellin 12 (GA12), a key step in gibberellins (GAs) biosynthesis. GAs, which are involved many processes, including stem elongation, play a central role in plant development. The polypeptide is Ent-kaurenoic acid oxidase 1 (Hordeum vulgare (Barley)).